The sequence spans 98 residues: Integration host factor subunit alpha (98 aa).

The interval 49–72 (FGNFDLRDKNQRPGRNPKTGEDIP) is disordered.

It belongs to the bacterial histone-like protein family. As to quaternary structure, heterodimer of an alpha and a beta chain.

Its function is as follows. This protein is one of the two subunits of integration host factor, a specific DNA-binding protein that functions in genetic recombination as well as in transcriptional and translational control. The protein is Integration host factor subunit alpha of Shewanella loihica (strain ATCC BAA-1088 / PV-4).